The following is a 118-amino-acid chain: Large ribosomal subunit protein bL19 (118 aa).

The protein belongs to the bacterial ribosomal protein bL19 family.

Functionally, this protein is located at the 30S-50S ribosomal subunit interface and may play a role in the structure and function of the aminoacyl-tRNA binding site. This chain is Large ribosomal subunit protein bL19, found in Herpetosiphon aurantiacus (strain ATCC 23779 / DSM 785 / 114-95).